A 296-amino-acid chain; its full sequence is 4-hydroxybenzoate octaprenyltransferase (296 aa).

8 helical membrane passes run 29 to 49 (IGVYLLLWPTLWAVWIAGKGA), 52 to 72 (LQTVCIFVLGVFLMRAAGCVI), 102 to 122 (ALVLFAVLVGLSFVLVLFTNA), 146 to 166 (YYPQVVLGAAFSWGMPMAFTA), 169 to 189 (GELPAAAWLLYIANLLWTVGY), 219 to 239 (VIILTLQGLALGCLMLAGARF), 241 to 261 (LGACFYIGLLAAAGCFAWEFW), and 275 to 295 (FLHNHWAGLAIFLGIVADYAV).

Belongs to the UbiA prenyltransferase family. Mg(2+) serves as cofactor.

Its subcellular location is the cell inner membrane. It catalyses the reaction all-trans-octaprenyl diphosphate + 4-hydroxybenzoate = 4-hydroxy-3-(all-trans-octaprenyl)benzoate + diphosphate. The protein operates within cofactor biosynthesis; ubiquinone biosynthesis. Its function is as follows. Catalyzes the prenylation of para-hydroxybenzoate (PHB) with an all-trans polyprenyl group. Mediates the second step in the final reaction sequence of ubiquinone-8 (UQ-8) biosynthesis, which is the condensation of the polyisoprenoid side chain with PHB, generating the first membrane-bound Q intermediate 3-octaprenyl-4-hydroxybenzoate. The sequence is that of 4-hydroxybenzoate octaprenyltransferase from Pseudomonas syringae pv. syringae (strain B728a).